The sequence spans 372 residues: Probable arabinan endo-1,5-alpha-L-arabinosidase B (372 aa).

Positions 1–16 (MTVLVALFCLVTWTLC) are cleaved as a signal peptide. Over residues 23 to 34 (STQGTQQPQQPE) the composition is skewed to low complexity. The disordered stretch occupies residues 23–52 (STQGTQQPQQPEKTPHPHPQPEDAFPPTHA). Asp-59 serves as the catalytic Proton acceptor. An N-linked (GlcNAc...) asparagine glycan is attached at Asn-120. The Proton donor role is filled by Glu-252. N-linked (GlcNAc...) asparagine glycosylation is present at Asn-363.

This sequence belongs to the glycosyl hydrolase 43 family.

Its subcellular location is the secreted. It carries out the reaction Endohydrolysis of (1-&gt;5)-alpha-arabinofuranosidic linkages in (1-&gt;5)-arabinans.. The protein operates within glycan metabolism; L-arabinan degradation. Its function is as follows. Endo-1,5-alpha-L-arabinanase involved in degradation of pectin. Its preferred substrate is linear 1,5-alpha-L-arabinan. This chain is Probable arabinan endo-1,5-alpha-L-arabinosidase B (abnB), found in Aspergillus fumigatus (strain CBS 144.89 / FGSC A1163 / CEA10) (Neosartorya fumigata).